The following is a 204-amino-acid chain: Somatotropin (204 aa).

The N-terminal stretch at 1 to 17 (MDRAVLLLSVLSLGVSS) is a signal peptide. Gln-18 carries the pyrrolidone carboxylic acid modification. Residue His-35 coordinates Zn(2+). Cysteines 69 and 177 form a disulfide. Glu-186 is a Zn(2+) binding site. A disulfide bridge links Cys-194 with Cys-202.

It belongs to the somatotropin/prolactin family.

The protein localises to the secreted. Growth hormone plays an important role in growth control and is involved in the regulation of several anabolic processes. Implicated as an osmoregulatory substance important for seawater adaptation. This chain is Somatotropin (gh), found in Morone saxatilis (Striped bass).